Reading from the N-terminus, the 473-residue chain is Vasculin (473 aa).

Disordered stretches follow at residues 1 to 25 (MAQH…SSLN), 45 to 169 (RRHN…KSRA), and 191 to 342 (VGNL…QERD). Position 49 is a phosphoserine (S49). An Omega-N-methylarginine modification is found at R87. Low complexity predominate over residues 93-107 (GSSRSRSSIFHSGKS). Over residues 119 to 133 (ETGRKEDKRERKQFE) the composition is skewed to basic and acidic residues. Composition is skewed to polar residues over residues 194–204 (LPSQPVKNGTG) and 251–286 (AFKS…QQPR). Phosphoserine is present on residues S274, S276, S322, and S381. The span at 293-329 (MRTDKKSEFLKALKRDRVEEEHEDESRAGSEKDDDSF) shows a compositional bias: basic and acidic residues. The interval 444 to 473 (GPWKNSTFKPTTENDDTETSSSDTSDDDDV) is disordered. Residues 456–473 (ENDDTETSSSDTSDDDDV) show a composition bias toward acidic residues.

The protein belongs to the vasculin family. In terms of assembly, interacts with GTF2B, GTF2F2, RNA polymerase II and TBP.

It is found in the nucleus. Its function is as follows. Functions as a GC-rich promoter-specific transactivating transcription factor. This is Vasculin (GPBP1) from Pongo abelii (Sumatran orangutan).